The chain runs to 226 residues: Deoxyribose-phosphate aldolase (226 aa).

Asp-84 acts as the Proton donor/acceptor in catalysis. Lys-146 serves as the catalytic Schiff-base intermediate with acetaldehyde. The Proton donor/acceptor role is filled by Lys-188.

Belongs to the DeoC/FbaB aldolase family. DeoC type 1 subfamily. In terms of assembly, homodimer.

The protein localises to the cytoplasm. The enzyme catalyses 2-deoxy-D-ribose 5-phosphate = D-glyceraldehyde 3-phosphate + acetaldehyde. The protein operates within carbohydrate degradation; 2-deoxy-D-ribose 1-phosphate degradation; D-glyceraldehyde 3-phosphate and acetaldehyde from 2-deoxy-alpha-D-ribose 1-phosphate: step 2/2. Catalyzes a reversible aldol reaction between acetaldehyde and D-glyceraldehyde 3-phosphate to generate 2-deoxy-D-ribose 5-phosphate. The protein is Deoxyribose-phosphate aldolase of Pyrobaculum aerophilum (strain ATCC 51768 / DSM 7523 / JCM 9630 / CIP 104966 / NBRC 100827 / IM2).